The sequence spans 323 residues: Muscleblind-like protein 3 (323 aa).

4 consecutive C3H1-type zinc fingers follow at residues 13 to 41, 47 to 73, 177 to 205, and 213 to 239; these read WLTLEVCREFQRGTCSRSDAECKFAHPSR, NGRVIACFDSLKGRCTRENCKYLHPPP, TDKLEVCREFQRGNCTRGESDCRYAHPLE, and ENSVIVCMDYIKGRCSRDKCKYFHPPA.

This sequence belongs to the muscleblind family. Expressed in fast and slow myotomal muscle, heart, liver, skin, brain and testis.

It is found in the nucleus. The protein resides in the cytoplasm. Its function is as follows. Involved in pre-mRNA alternative splicing regulation. Could inhibit terminal muscle differentiation, acting at approximately the time of myogenin induction. This Takifugu rubripes (Japanese pufferfish) protein is Muscleblind-like protein 3 (mbnl3).